Here is a 95-residue protein sequence, read N- to C-terminus: Co-chaperonin GroES (95 aa).

This sequence belongs to the GroES chaperonin family. Heptamer of 7 subunits arranged in a ring. Interacts with the chaperonin GroEL.

The protein resides in the cytoplasm. In terms of biological role, together with the chaperonin GroEL, plays an essential role in assisting protein folding. The GroEL-GroES system forms a nano-cage that allows encapsulation of the non-native substrate proteins and provides a physical environment optimized to promote and accelerate protein folding. GroES binds to the apical surface of the GroEL ring, thereby capping the opening of the GroEL channel. The chain is Co-chaperonin GroES from Streptococcus equi subsp. equi (strain 4047).